A 330-amino-acid chain; its full sequence is Glycerol-3-phosphate dehydrogenase [NAD(P)+] (330 aa).

NADPH-binding residues include Ser11, Phe12, Arg32, and Lys106. Positions 106, 133, and 135 each coordinate sn-glycerol 3-phosphate. Ala137 contributes to the NADPH binding site. Positions 188, 241, 251, 252, and 253 each coordinate sn-glycerol 3-phosphate. Lys188 acts as the Proton acceptor in catalysis. Arg252 provides a ligand contact to NADPH. NADPH-binding residues include Val276 and Glu278.

This sequence belongs to the NAD-dependent glycerol-3-phosphate dehydrogenase family.

It is found in the cytoplasm. The enzyme catalyses sn-glycerol 3-phosphate + NAD(+) = dihydroxyacetone phosphate + NADH + H(+). It carries out the reaction sn-glycerol 3-phosphate + NADP(+) = dihydroxyacetone phosphate + NADPH + H(+). Its pathway is membrane lipid metabolism; glycerophospholipid metabolism. Its function is as follows. Catalyzes the reduction of the glycolytic intermediate dihydroxyacetone phosphate (DHAP) to sn-glycerol 3-phosphate (G3P), the key precursor for phospholipid synthesis. This chain is Glycerol-3-phosphate dehydrogenase [NAD(P)+], found in Clostridium botulinum (strain Eklund 17B / Type B).